The sequence spans 188 residues: Xanthine phosphoribosyltransferase (188 aa).

Xanthine is bound by residues L20 and N27. Residue 127–131 (AHGEA) coordinates 5-phospho-alpha-D-ribose 1-diphosphate. K155 serves as a coordination point for xanthine.

Belongs to the purine/pyrimidine phosphoribosyltransferase family. Xpt subfamily. As to quaternary structure, homodimer.

It is found in the cytoplasm. The enzyme catalyses XMP + diphosphate = xanthine + 5-phospho-alpha-D-ribose 1-diphosphate. It participates in purine metabolism; XMP biosynthesis via salvage pathway; XMP from xanthine: step 1/1. In terms of biological role, converts the preformed base xanthine, a product of nucleic acid breakdown, to xanthosine 5'-monophosphate (XMP), so it can be reused for RNA or DNA synthesis. In Heliobacterium modesticaldum (strain ATCC 51547 / Ice1), this protein is Xanthine phosphoribosyltransferase.